The sequence spans 154 residues: Large-conductance mechanosensitive channel (154 aa).

Transmembrane regions (helical) follow at residues 12 to 32 (GNIVDLAVAVVIGTAFTALIT) and 71 to 91 (IVLSAAINFLLIALVVYFLVV). The disordered stretch occupies residues 129-154 (NGAPSGRHVDTADLTPTPNHEPRADT).

This sequence belongs to the MscL family. In terms of assembly, homopentamer.

Its subcellular location is the cell membrane. Channel that opens in response to stretch forces in the membrane lipid bilayer. May participate in the regulation of osmotic pressure changes within the cell. In Mycobacterium leprae (strain Br4923), this protein is Large-conductance mechanosensitive channel.